A 647-amino-acid chain; its full sequence is Auxin efflux carrier component 2 (647 aa).

Residues 1-7 are Extracellular-facing; the sequence is MITGKDM. A helical transmembrane segment spans residues 8–28; sequence YDVLAAMVPLYVAMILAYGSV. Over 29-38 the chain is Cytoplasmic; that stretch reads RWWGIFTPDQ. Residues 39–59 traverse the membrane as a helical segment; the sequence is CSGINRFVAVFAVPLLSFHFI. A (indol-3-yl)acetate-binding site is contributed by Val51. Over 60–68 the chain is Extracellular; that stretch reads SSNDPYAMN. A helical transmembrane segment spans residues 69-89; the sequence is YHFLAADSLQKVVILAALFLW. The Cytoplasmic segment spans residues 90 to 100; that stretch reads QAFSRRGSLEW. A helical membrane pass occupies residues 101 to 121; that stretch reads MITLFSLSTLPNTLVMGIPLL. Asn112 and Leu114 together coordinate (indol-3-yl)acetate. Residues 122 to 131 lie on the Extracellular side of the membrane; sequence RAMYGDFSGN. The helical transmembrane segment at 132–152 threads the bilayer; the sequence is LMVQIVVLQSIIWYTLMLFLF. Tyr145 is a binding site for (indol-3-yl)acetate. At 153 to 507 the chain is on the cytoplasmic side; sequence EFRGAKLLIS…LIRNPNTYSS (355 aa). Phosphoserine is present on residues Ser237, Ser258, and Ser310. The interval 339-380 is disordered; that stretch reads SVPSYPPPNPMFTGSTSGASGVKKKESGGGGSGGGVGVGGQN. Thr354 carries the phosphothreonine modification. The segment covering 366–378 has biased composition (gly residues); that stretch reads GGGGSGGGVGVGG. Ser393 bears the Phosphoserine mark. Disordered regions lie at residues 397-420 and 440-481; these read EANA…KVSI and PGRK…QQMP. Residues 508–528 traverse the membrane as a helical segment; sequence LFGLAWSLVSFKWNIKMPTIM. The Extracellular segment spans residues 529–531; sequence SGS. The chain crosses the membrane as a helical span at residues 532 to 552; the sequence is ISILSDAGLGMAMFSLGLFMA. Residues 553 to 568 lie on the Cytoplasmic side of the membrane; the sequence is LQPKIIACGKSVAGFA. The chain crosses the membrane as a helical span at residues 569–589; that stretch reads MAVRFLTGPAVIAATSIAIGI. The Extracellular portion of the chain corresponds to 590–592; the sequence is RGD. Residues 593–613 traverse the membrane as a helical segment; sequence LLHIAIVQAALPQGIVPFVFA. (indol-3-yl)acetate is bound by residues Ile607 and Val608. Over 614–626 the chain is Cytoplasmic; the sequence is KEYNVHPDILSTA. A helical membrane pass occupies residues 627 to 647; the sequence is VIFGMLVALPVTVLYYVLLGL.

Belongs to the auxin efflux carrier (TC 2.A.69.1) family. In terms of assembly, homodimer. Interacts with FYPP1 and FYPP3. Component of a complex made of PINs (e.g. PIN1 and PIN2), MAB4/MELs (e.g. NPY1/MAB4 and NPY5/MEL1) and AGC kinases (e.g. D6PK and PID) at the plasma membrane. Binds directly to NPY1/MAB4, NPY5/MEL1 and PID. Root-specific. Localized to the cortex, epidermis and lateral root cap, predominantly at the upper side of cells.

It localises to the cell membrane. Functionally, acts as a component of the auxin efflux carrier. Seems to be involved in the root-specific auxin transport, and mediates the root gravitropism. Its particular localization suggests a role in the translocation of auxin towards the elongation zone. Recrutes NPY proteins (e.g. NPY1/MAB4 and NPY5/MEL1) to the plasma membrane in a polar basal localization in root epidermis; this activity is optimized by AGC kinases-mediated (e.g. D6PK and PID) phosphorylation that limits their lateral diffusion-based escape. The polypeptide is Auxin efflux carrier component 2 (Arabidopsis thaliana (Mouse-ear cress)).